Consider the following 320-residue polypeptide: Methionyl-tRNA formyltransferase (320 aa).

111–114 (SLLP) lines the (6S)-5,6,7,8-tetrahydrofolate pocket.

The protein belongs to the Fmt family.

It carries out the reaction L-methionyl-tRNA(fMet) + (6R)-10-formyltetrahydrofolate = N-formyl-L-methionyl-tRNA(fMet) + (6S)-5,6,7,8-tetrahydrofolate + H(+). Its function is as follows. Attaches a formyl group to the free amino group of methionyl-tRNA(fMet). The formyl group appears to play a dual role in the initiator identity of N-formylmethionyl-tRNA by promoting its recognition by IF2 and preventing the misappropriation of this tRNA by the elongation apparatus. The protein is Methionyl-tRNA formyltransferase of Methylacidiphilum infernorum (isolate V4) (Methylokorus infernorum (strain V4)).